We begin with the raw amino-acid sequence, 945 residues long: Isoleucine--tRNA ligase (945 aa).

The 'HIGH' region motif lies at 66-76 (PYANGDIHLGH). Glu581 is a binding site for L-isoleucyl-5'-AMP. Residues 622–626 (KMSKS) carry the 'KMSKS' region motif. An ATP-binding site is contributed by Lys625. Zn(2+)-binding residues include Cys908, Cys911, Cys928, and Cys931.

The protein belongs to the class-I aminoacyl-tRNA synthetase family. IleS type 1 subfamily. Monomer. Requires Zn(2+) as cofactor.

The protein resides in the cytoplasm. The enzyme catalyses tRNA(Ile) + L-isoleucine + ATP = L-isoleucyl-tRNA(Ile) + AMP + diphosphate. Functionally, catalyzes the attachment of isoleucine to tRNA(Ile). As IleRS can inadvertently accommodate and process structurally similar amino acids such as valine, to avoid such errors it has two additional distinct tRNA(Ile)-dependent editing activities. One activity is designated as 'pretransfer' editing and involves the hydrolysis of activated Val-AMP. The other activity is designated 'posttransfer' editing and involves deacylation of mischarged Val-tRNA(Ile). This chain is Isoleucine--tRNA ligase, found in Burkholderia cenocepacia (strain HI2424).